We begin with the raw amino-acid sequence, 310 residues long: Porphobilinogen deaminase (310 aa).

At Cys-242 the chain carries S-(dipyrrolylmethanemethyl)cysteine.

This sequence belongs to the HMBS family. Monomer. Dipyrromethane serves as cofactor.

It catalyses the reaction 4 porphobilinogen + H2O = hydroxymethylbilane + 4 NH4(+). The protein operates within porphyrin-containing compound metabolism; protoporphyrin-IX biosynthesis; coproporphyrinogen-III from 5-aminolevulinate: step 2/4. Tetrapolymerization of the monopyrrole PBG into the hydroxymethylbilane pre-uroporphyrinogen in several discrete steps. In Shewanella baltica (strain OS155 / ATCC BAA-1091), this protein is Porphobilinogen deaminase.